Consider the following 453-residue polypeptide: Trigger factor (453 aa).

The PPIase FKBP-type domain maps to 171–256; the sequence is GDRVTINFKG…ATSIEAPQDI (86 aa).

Belongs to the FKBP-type PPIase family. Tig subfamily.

It is found in the cytoplasm. The catalysed reaction is [protein]-peptidylproline (omega=180) = [protein]-peptidylproline (omega=0). Its function is as follows. Involved in protein export. Acts as a chaperone by maintaining the newly synthesized protein in an open conformation. Functions as a peptidyl-prolyl cis-trans isomerase. The chain is Trigger factor from Bradyrhizobium diazoefficiens (strain JCM 10833 / BCRC 13528 / IAM 13628 / NBRC 14792 / USDA 110).